Consider the following 179-residue polypeptide: Large ribosomal subunit protein uL5 (179 aa).

Belongs to the universal ribosomal protein uL5 family. In terms of assembly, part of the 50S ribosomal subunit; part of the 5S rRNA/L5/L18/L25 subcomplex. Contacts the 5S rRNA and the P site tRNA. Forms a bridge to the 30S subunit in the 70S ribosome.

Functionally, this is one of the proteins that bind and probably mediate the attachment of the 5S RNA into the large ribosomal subunit, where it forms part of the central protuberance. In the 70S ribosome it contacts protein S13 of the 30S subunit (bridge B1b), connecting the 2 subunits; this bridge is implicated in subunit movement. Contacts the P site tRNA; the 5S rRNA and some of its associated proteins might help stabilize positioning of ribosome-bound tRNAs. This Pseudomonas syringae pv. tomato (strain ATCC BAA-871 / DC3000) protein is Large ribosomal subunit protein uL5.